The sequence spans 176 residues: NAD(P)H-quinone oxidoreductase subunit 6, chloroplastic (176 aa).

5 helical membrane-spanning segments follow: residues 10–30 (FLLV…VLLP), 32–52 (PIFS…LYIL), 61–81 (AQLL…VMFM), 92–112 (LWTV…FLLM), and 152–172 (FFLP…GAIS).

The protein belongs to the complex I subunit 6 family. As to quaternary structure, NDH is composed of at least 16 different subunits, 5 of which are encoded in the nucleus.

It is found in the plastid. The protein resides in the chloroplast thylakoid membrane. The catalysed reaction is a plastoquinone + NADH + (n+1) H(+)(in) = a plastoquinol + NAD(+) + n H(+)(out). It catalyses the reaction a plastoquinone + NADPH + (n+1) H(+)(in) = a plastoquinol + NADP(+) + n H(+)(out). In terms of biological role, NDH shuttles electrons from NAD(P)H:plastoquinone, via FMN and iron-sulfur (Fe-S) centers, to quinones in the photosynthetic chain and possibly in a chloroplast respiratory chain. The immediate electron acceptor for the enzyme in this species is believed to be plastoquinone. Couples the redox reaction to proton translocation, and thus conserves the redox energy in a proton gradient. This Capsella bursa-pastoris (Shepherd's purse) protein is NAD(P)H-quinone oxidoreductase subunit 6, chloroplastic (ndhG).